Consider the following 161-residue polypeptide: Nucleotide-binding protein Gbem_0619 (161 aa).

It belongs to the YajQ family.

In terms of biological role, nucleotide-binding protein. The sequence is that of Nucleotide-binding protein Gbem_0619 from Citrifermentans bemidjiense (strain ATCC BAA-1014 / DSM 16622 / JCM 12645 / Bem) (Geobacter bemidjiensis).